Reading from the N-terminus, the 554-residue chain is Dihydroxy-acid dehydratase (554 aa).

Residue Asp-78 participates in Mg(2+) binding. Cys-119 contributes to the [2Fe-2S] cluster binding site. Mg(2+) is bound by residues Asp-120 and Lys-121. Lys-121 bears the N6-carboxylysine mark. Cys-192 contributes to the [2Fe-2S] cluster binding site. Glu-443 is a Mg(2+) binding site. The active-site Proton acceptor is Ser-469.

It belongs to the IlvD/Edd family. Homodimer. [2Fe-2S] cluster serves as cofactor. Mg(2+) is required as a cofactor.

It catalyses the reaction (2R)-2,3-dihydroxy-3-methylbutanoate = 3-methyl-2-oxobutanoate + H2O. The enzyme catalyses (2R,3R)-2,3-dihydroxy-3-methylpentanoate = (S)-3-methyl-2-oxopentanoate + H2O. Its pathway is amino-acid biosynthesis; L-isoleucine biosynthesis; L-isoleucine from 2-oxobutanoate: step 3/4. It participates in amino-acid biosynthesis; L-valine biosynthesis; L-valine from pyruvate: step 3/4. Its function is as follows. Functions in the biosynthesis of branched-chain amino acids. Catalyzes the dehydration of (2R,3R)-2,3-dihydroxy-3-methylpentanoate (2,3-dihydroxy-3-methylvalerate) into 2-oxo-3-methylpentanoate (2-oxo-3-methylvalerate) and of (2R)-2,3-dihydroxy-3-methylbutanoate (2,3-dihydroxyisovalerate) into 2-oxo-3-methylbutanoate (2-oxoisovalerate), the penultimate precursor to L-isoleucine and L-valine, respectively. The polypeptide is Dihydroxy-acid dehydratase (Shouchella clausii (strain KSM-K16) (Alkalihalobacillus clausii)).